A 266-amino-acid chain; its full sequence is Hydroxyethylthiazole kinase (266 aa).

Met43 contributes to the substrate binding site. The ATP site is built by Arg119 and Thr166. Residue Gly193 coordinates substrate.

The protein belongs to the Thz kinase family. Mg(2+) serves as cofactor.

The catalysed reaction is 5-(2-hydroxyethyl)-4-methylthiazole + ATP = 4-methyl-5-(2-phosphooxyethyl)-thiazole + ADP + H(+). Its pathway is cofactor biosynthesis; thiamine diphosphate biosynthesis; 4-methyl-5-(2-phosphoethyl)-thiazole from 5-(2-hydroxyethyl)-4-methylthiazole: step 1/1. Its function is as follows. Catalyzes the phosphorylation of the hydroxyl group of 4-methyl-5-beta-hydroxyethylthiazole (THZ). In Methanococcus maripaludis (strain DSM 14266 / JCM 13030 / NBRC 101832 / S2 / LL), this protein is Hydroxyethylthiazole kinase.